We begin with the raw amino-acid sequence, 298 residues long: Protoheme IX farnesyltransferase (298 aa).

The next 9 membrane-spanning stretches (helical) occupy residues 26–46 (VVSL…PGVV), 52–72 (IFAT…NCLV), 99–119 (FVFL…LVNP), 120–140 (LTMW…TVIL), 148–168 (IVIG…AVTG), 174–194 (ALLL…ALAL), 219–239 (LHVL…YATQ), 241–261 (SGLI…YYAV), and 276–296 (FRYS…DHYI).

The protein belongs to the UbiA prenyltransferase family. Protoheme IX farnesyltransferase subfamily.

The protein resides in the cell inner membrane. The enzyme catalyses heme b + (2E,6E)-farnesyl diphosphate + H2O = Fe(II)-heme o + diphosphate. It functions in the pathway porphyrin-containing compound metabolism; heme O biosynthesis; heme O from protoheme: step 1/1. In terms of biological role, converts heme B (protoheme IX) to heme O by substitution of the vinyl group on carbon 2 of heme B porphyrin ring with a hydroxyethyl farnesyl side group. This is Protoheme IX farnesyltransferase from Nitrosospira multiformis (strain ATCC 25196 / NCIMB 11849 / C 71).